The sequence spans 239 residues: tRNA (guanine-N(1)-)-methyltransferase (239 aa).

S-adenosyl-L-methionine-binding positions include Gly-108 and 127–132 (LGDYVL).

It belongs to the RNA methyltransferase TrmD family. Homodimer.

The protein localises to the cytoplasm. It catalyses the reaction guanosine(37) in tRNA + S-adenosyl-L-methionine = N(1)-methylguanosine(37) in tRNA + S-adenosyl-L-homocysteine + H(+). Functionally, specifically methylates guanosine-37 in various tRNAs. This is tRNA (guanine-N(1)-)-methyltransferase from Streptococcus pneumoniae serotype 19F (strain G54).